Reading from the N-terminus, the 895-residue chain is Stonin-2 (895 aa).

Disordered regions lie at residues 15 to 119 (WVSF…PPHK), 145 to 222 (SESS…APPV), and 234 to 280 (EDNE…KSTL). A compositionally biased stretch (basic and acidic residues) spans 64 to 73 (SHSEQDDSSE). A compositionally biased stretch (polar residues) spans 145–193 (SESSWTTHSEDTSSPSVAPSYTDLQLINTEEQASGRASGTDSTDNSSSL). The span at 241-251 (PSPPVPSPKKP) shows a compositional bias: pro residues. A Phosphothreonine modification is found at Thr-253. Ser-278 and Ser-299 each carry phosphoserine. 2 consecutive short sequence motifs (NPF) follow at residues 310–312 (NPF) and 326–328 (NPF). The segment at 386–421 (QIDDPDPVGNTALPDDDPTASVELDAPSPASALSQP) is disordered. Residues 424–557 (GWPMMLRIPE…DLPVLSMDLS (134 aa)) enclose the SHD domain. The 308-residue stretch at 565-872 (EEEITVDVRD…AHYSYKVEIE (308 aa)) folds into the MHD domain. A Phosphoserine modification is found at Ser-759.

This sequence belongs to the Stoned B family. In terms of assembly, interacts with the second C2 domain of synaptotagmins SYT1 and SYT2. Interacts with EPS15, EPS15R and ITSN1. Interacts indirectly with the AP-2 adapter complex. Interacts with TOR1A and COPS4; the interaction controls STON2 protein stability. Post-translationally, phosphorylated in vitro by PKD. Neddylated; deneddylated via its interaction with the COP9 signalosome (CSN) complex through TOR1A and COPS4. In terms of processing, ubiquitinated; leading to its degradation.

The protein resides in the cytoplasm. The protein localises to the membrane. Its subcellular location is the synapse. It localises to the synaptosome. Functionally, adapter protein involved in endocytic machinery. Involved in the synaptic vesicle recycling. May facilitate clathrin-coated vesicle uncoating. The polypeptide is Stonin-2 (Ston2) (Mus musculus (Mouse)).